A 165-amino-acid polypeptide reads, in one-letter code: Neurotrophin-3 (165 aa).

A signal peptide spans 1-3; sequence IQS. The propeptide occupies 4–119; the sequence is TSMDQGSLSE…VLNQTSRRKR (116 aa). An N-linked (GlcNAc...) asparagine glycan is attached at asparagine 112.

Belongs to the NGF-beta family.

Its subcellular location is the secreted. In terms of biological role, seems to promote the survival of visceral and proprioceptive sensory neurons. This Aspidites melanocephalus (Black-headed python) protein is Neurotrophin-3 (NTF3).